The sequence spans 685 residues: Mesothelin-like protein (685 aa).

The first 32 residues, 1–32 (MSRTLRPSAMGSRVGALASPGLALLLSLTAHC), serve as a signal peptide directing secretion. Residues 33–627 (SGPQAKGLPK…GVSHTSGSPP (595 aa)) lie on the Extracellular side of the membrane. 2 N-linked (GlcNAc...) asparagine glycosylation sites follow: Asn315 and Asn400. A disordered region spans residues 603–624 (PPSSLIHSLDPPGNDGVSHTSG). The chain crosses the membrane as a helical span at residues 628-648 (VHLGYLSLAVALPSSLLWLLL). Topologically, residues 649 to 685 (CQLPSGQMATAHRTLGPMALAQGSWTPEHQIPEKRSC) are cytoplasmic.

The protein belongs to the mesothelin family.

It localises to the membrane. May play a role in cellular adhesion. The polypeptide is Mesothelin-like protein (Mslnl) (Mus musculus (Mouse)).